Here is a 692-residue protein sequence, read N- to C-terminus: Transforming growth factor beta activator LRRC33 (692 aa).

A signal peptide spans 1–18 (MELLPLWLCLGFHFLTVG). At 19–650 (WRNRSGTATA…CKWERLDLGL (632 aa)) the chain is on the extracellular side. N-linked (GlcNAc...) asparagine glycosylation occurs at N21. The LRRNT domain maps to 29–56 (ASQGVCKLVGGAADCRGQSLASVPSSLP). 10 LRR repeats span residues 58 to 79 (HARM…SLQP), 82 to 103 (LLES…AFQE), 106 to 127 (HLRS…TAAA), 133 to 155 (GLRR…MLQN), 158 to 179 (SLRS…VFEG), 182 to 203 (RLRE…AFDG), 206 to 227 (ELRH…GLTR), 228 to 239 (LRVLNVSYNVLE), 251 to 272 (ELET…PQYS), and 273 to 294 (KLRT…YNTS). A glycan (N-linked (GlcNAc...) asparagine) is linked at N74. N-linked (GlcNAc...) asparagine glycosylation is present at N155. N-linked (GlcNAc...) asparagine glycosylation is present at N232. Residues N292, N309, and N312 are each glycosylated (N-linked (GlcNAc...) asparagine). LRR repeat units follow at residues 329–350 (DLRF…FLRK), 353–374 (SLSH…EHEP), 377–398 (ALTE…PGLA), 403–424 (SLRL…LFAN), 427–447 (NITT…PAAS), 463–484 (SLRS…PFQG), 486–507 (SLTY…APLQ), 512–534 (MLQV…DFSG), 537–558 (NLRD…GGSL), 559–580 (ALET…AVSE), and 585–594 (GLRTIYLSQN). N408 and N427 each carry an N-linked (GlcNAc...) asparagine glycan. N500 is a glycosylation site (N-linked (GlcNAc...) asparagine). Positions 595 to 643 (PYDCCGVDGWGALQHGQTVADWAMVTCNLSSKIIRVTELPGGVPRDCKW) constitute an LRRCT domain. N-linked (GlcNAc...) asparagine glycosylation is present at N622. The helical transmembrane segment at 651 to 671 (LYLVLILPSCLTLLVACTVIV) threads the bilayer. The Cytoplasmic segment spans residues 672-692 (LTFKKPLLQVIKSRCHWSSVY).

Belongs to the LRRC32/LRRC33 family. In terms of assembly, interacts with TGFB1; associates via disulfide bonds with the Latency-associated peptide chain (LAP) regulatory chain of TGFB1, leading to regulate activation of TGF-beta-1. Interacts (via LRR repeats) with TLR2, TLR3, TLR4, TLR9 and probably other Toll-like receptors. Interacts with CYBB/NOX2; the interaction is direct. In terms of tissue distribution, mainly expressed in cells of hematopoietic origin. Highly expressed in bone marrow, thymus, liver, lung, intestine and spleen. In the brain, highly expressed in microglia.

The protein localises to the cell membrane. It is found in the endoplasmic reticulum membrane. Functionally, key regulator of transforming growth factor beta-1 (TGFB1) specifically required for microglia function in the nervous system. Required for activation of latent TGF-beta-1 in macrophages and microglia: associates specifically via disulfide bonds with the Latency-associated peptide (LAP), which is the regulatory chain of TGFB1, and regulates integrin-dependent activation of TGF-beta-1. TGF-beta-1 activation mediated by LRRC33/NRROS is highly localized: there is little spreading of TGF-beta-1 activated from one microglial cell to neighboring microglia, suggesting the existence of localized and selective activation of TGF-beta-1 by LRRC33/NRROS. Indirectly plays a role in Toll-like receptor (TLR) signaling: ability to inhibit TLR-mediated NF-kappa-B activation and cytokine production is probably a consequence of its role in TGF-beta-1 signaling. The chain is Transforming growth factor beta activator LRRC33 from Homo sapiens (Human).